Reading from the N-terminus, the 353-residue chain is MSRDIIKLDQIDVTFHQKKRTITAVKDVTIHIQEGDIYGIVGYSGAGKSTLVRVINLLQKPSAGKITIDDDVIFDGKVTLTAEQLRRKRQDIGMIFQHFNLMSQKTAEENVAFALKHSGLSKEEKKAKVAKLLDLVGLADRAENYPSQLSGGQKQRVAIARALANDPKILISDESTSALDPKTTKQILALLQDLNQKLGLTVVLITHEMQIVKDIANRVAVMQDGHLIEEGSVLEIFSNPKQPLTQDFISTATGIDEAMVKIEKQEIVEHLSENSLLVQLKYAGASTDEPLLNELYKHYQVMANILYGNIEILDGTPVGELVVVLSGEKAALAGAQEAIRQAGVQLKVLKGVQ.

Positions leucine 8 to isoleucine 249 constitute an ABC transporter domain. ATP is bound at residue glycine 42–serine 49.

The protein belongs to the ABC transporter superfamily. Methionine importer (TC 3.A.1.24) family. As to quaternary structure, the complex is composed of two ATP-binding proteins (MetN), two transmembrane proteins (MetI) and a solute-binding protein (MetQ).

The protein localises to the cell membrane. It carries out the reaction L-methionine(out) + ATP + H2O = L-methionine(in) + ADP + phosphate + H(+). The enzyme catalyses D-methionine(out) + ATP + H2O = D-methionine(in) + ADP + phosphate + H(+). Part of the ABC transporter complex MetNIQ involved in methionine import. Responsible for energy coupling to the transport system. The chain is Methionine import ATP-binding protein MetN from Streptococcus pneumoniae (strain ATCC BAA-255 / R6).